Consider the following 250-residue polypeptide: DNA repair protein RecO (250 aa).

The protein belongs to the RecO family.

In terms of biological role, involved in DNA repair and RecF pathway recombination. The polypeptide is DNA repair protein RecO (Staphylococcus aureus (strain bovine RF122 / ET3-1)).